A 54-amino-acid chain; its full sequence is Large ribosomal subunit protein bL33 (54 aa).

This sequence belongs to the bacterial ribosomal protein bL33 family.

This chain is Large ribosomal subunit protein bL33, found in Corynebacterium urealyticum (strain ATCC 43042 / DSM 7109).